The primary structure comprises 130 residues: Small ribosomal subunit protein uS8 (130 aa).

The protein belongs to the universal ribosomal protein uS8 family. As to quaternary structure, part of the 30S ribosomal subunit. Contacts proteins S5 and S12.

One of the primary rRNA binding proteins, it binds directly to 16S rRNA central domain where it helps coordinate assembly of the platform of the 30S subunit. This chain is Small ribosomal subunit protein uS8, found in Shewanella frigidimarina (strain NCIMB 400).